Reading from the N-terminus, the 206-residue chain is Small ribosomal subunit protein uS4 (206 aa).

Residues 96 to 156 form the S4 RNA-binding domain; sequence QRLDNVVYRM…EKSKTQARII (61 aa).

Belongs to the universal ribosomal protein uS4 family. As to quaternary structure, part of the 30S ribosomal subunit. Contacts protein S5. The interaction surface between S4 and S5 is involved in control of translational fidelity.

Its function is as follows. One of the primary rRNA binding proteins, it binds directly to 16S rRNA where it nucleates assembly of the body of the 30S subunit. Functionally, with S5 and S12 plays an important role in translational accuracy. The chain is Small ribosomal subunit protein uS4 from Pseudoalteromonas translucida (strain TAC 125).